We begin with the raw amino-acid sequence, 551 residues long: Calcium-dependent protein kinase 13 (551 aa).

Glycine 2 carries N-myristoyl glycine lipidation. The segment at 15 to 78 (SFKQTASQRH…APADLGSVLG (64 aa)) is disordered. The Protein kinase domain occupies 88-346 (YAMGRKLGQG…AHEVLCHPWI (259 aa)). Residues 94 to 102 (LGQGQFGTT) and lysine 117 each bind ATP. Residue aspartate 212 is the Proton acceptor of the active site. Positions 352–382 (APDRPLDPAVLSRIKQFSAMNKLKKMALRVI) are autoinhibitory domain. EF-hand domains follow at residues 389–424 (EEIA…YGST), 425–460 (LKDT…LNKL), 461–496 (EREE…HNMP), and 497–530 (DAFL…GNMG). The Ca(2+) site is built by aspartate 402, aspartate 404, serine 406, glutamate 413, aspartate 438, aspartate 440, serine 442, threonine 444, glutamate 449, aspartate 474, aspartate 476, serine 478, tyrosine 480, glutamate 485, aspartate 508, aspartate 510, aspartate 512, arginine 514, and glutamate 519.

The protein belongs to the protein kinase superfamily. Ser/Thr protein kinase family. CDPK subfamily. In terms of tissue distribution, expressed in vascular tissues of crowns and roots, vascular bundles and central cylinder. Expressed in roots, leaf blades, spikelets and developing seeds.

The protein resides in the membrane. The catalysed reaction is L-seryl-[protein] + ATP = O-phospho-L-seryl-[protein] + ADP + H(+). The enzyme catalyses L-threonyl-[protein] + ATP = O-phospho-L-threonyl-[protein] + ADP + H(+). Its activity is regulated as follows. Activated by calcium. Autophosphorylation may play an important role in the regulation of the kinase activity. In terms of biological role, may play a role in signal transduction pathways that involve calcium as a second messenger. May function in signal transduction pathways that positively regulate responses to cold, salt and drought stresses. This chain is Calcium-dependent protein kinase 13, found in Oryza sativa subsp. japonica (Rice).